A 302-amino-acid chain; its full sequence is Ubiquitin thioesterase OTU1 (302 aa).

The tract at residues 5–83 (RCKARSGTQP…IVEEDTSKPS (79 aa)) is UBX-like. The OTU domain occupies 103–228 (LARRVVPADN…GIHYDPLERK (126 aa)). Positions 108–114 (VPADNSC) are cys-loop. The active site involves Asp-111. The active-site Nucleophile is the Cys-114. The tract at residues 167–177 (IRREETWGGAI) is variable-loop. The his-loop stretch occupies residues 217-221 (YDGIH). Ile-220 contributes to the substrate binding site. The active site involves His-221. The segment at 245–250 (DVVLAQ) is S2 site. Residues 272 to 296 (LRCMVCQKGLTGQVEAREHAKETGH) form a C2H2-type zinc finger. His-296 is an active-site residue.

The protein resides in the cytoplasm. It carries out the reaction Thiol-dependent hydrolysis of ester, thioester, amide, peptide and isopeptide bonds formed by the C-terminal Gly of ubiquitin (a 76-residue protein attached to proteins as an intracellular targeting signal).. Its function is as follows. Hydrolase that can remove conjugated ubiquitin from proteins and participates in endoplasmic reticulum-associated degradation (ERAD) for misfolded lumenal proteins. May act by triming the ubiquitin chain on the associated substrate to facilitate their threading through the VCP/p97 pore. Ubiquitin moieties on substrates may present a steric impediment to the threading process when the substrate is transferred to the VCP pore and threaded through VCP's axial channel. Mediates deubiquitination of 'Lys-27'-, 'Lys-29'- and 'Lys-33'-linked polyubiquitin chains. Also able to hydrolyze 'Lys-11'-linked ubiquitin chains. Cleaves both polyubiquitin and di-ubiquitin. This is Ubiquitin thioesterase OTU1 (YOD1) from Gallus gallus (Chicken).